The sequence spans 307 residues: Trehalose transport system permease protein SugA (307 aa).

6 consecutive transmembrane segments (helical) span residues 25–45, 89–109, 123–143, 168–188, 217–237, and 272–292; these read LAFM…AYPI, LAIT…LALV, AVLI…YYAW, LGIV…LLLL, ILPM…LDAF, and LGSA…FIFI. In terms of domain architecture, ABC transmembrane type-1 spans 85–291; the sequence is LAVTLAITAV…GCVAVIAFIF (207 aa).

The protein belongs to the binding-protein-dependent transport system permease family. The complex is composed of two ATP-binding proteins (SugC), two transmembrane proteins (Suga and SugB) and a solute-binding protein (LpqY).

The protein localises to the cell inner membrane. Its function is as follows. Part of the ABC transporter complex LpqY-SugA-SugB-SugC, which is highly specific for uptake of trehalose. Involved in the recycling of extracellular trehalose released from trehalose-containing molecules synthesized by M.tuberculosis. Trehalose uptake is essential for virulence. Probably responsible for the translocation of the substrate across the membrane. The chain is Trehalose transport system permease protein SugA (sugA) from Mycobacterium tuberculosis (strain CDC 1551 / Oshkosh).